The sequence spans 580 residues: Peptidyl-prolyl cis-trans isomerase-like 2 (580 aa).

Positions 42 to 115 constitute a U-box domain; the sequence is KRLPFRFCSL…GEYIDPVTYK (74 aa). Disordered regions lie at residues 182-201, 227-259, 439-459, 479-530, and 553-580; these read IKEG…EDPS, QERA…SYQS, SPTL…RPTP, QKKQ…SSTT, and FVDE…SSWD. Positions 309 to 468 constitute a PPIase cyclophilin-type domain; sequence QKGYARISTT…PDIRIVDVTI (160 aa). The segment covering 439–457 has biased composition (polar residues); the sequence is SPTLNKLETHPVNPTTNRP. Residues 490–507 show a composition bias toward basic and acidic residues; it reads EANRTAENDEEGSRRAED.

Belongs to the cyclophilin-type PPIase family. PPIL2 subfamily.

It is found in the nucleus. It catalyses the reaction [protein]-peptidylproline (omega=180) = [protein]-peptidylproline (omega=0). It carries out the reaction S-ubiquitinyl-[E2 ubiquitin-conjugating enzyme]-L-cysteine + [acceptor protein]-L-lysine = [E2 ubiquitin-conjugating enzyme]-L-cysteine + N(6)-ubiquitinyl-[acceptor protein]-L-lysine.. The protein operates within protein modification; protein ubiquitination. In terms of biological role, may catalyze the cis-trans isomerization of proline imidic peptide bonds in oligopeptides thereby assisting the folding of proteins. May also function as a chaperone, playing a role in intracellular transport of proteins. May also have a protein ubiquitin ligase activity acting as an E3 ubiquitin protein ligase or as a ubiquitin-ubiquitin ligase promoting elongation of ubiquitin chains on proteins. This Emericella nidulans (strain FGSC A4 / ATCC 38163 / CBS 112.46 / NRRL 194 / M139) (Aspergillus nidulans) protein is Peptidyl-prolyl cis-trans isomerase-like 2 (cyp8).